A 170-amino-acid polypeptide reads, in one-letter code: Siroheme decarboxylase NirL subunit (170 aa).

It belongs to the Ahb/Nir family. As to quaternary structure, probably forms a complex composed of NirD, NirL, NirG and NirH. All proteins are required for the total conversion of siroheme to didecarboxysiroheme.

It carries out the reaction siroheme + 2 H(+) = 12,18-didecarboxysiroheme + 2 CO2. The protein operates within porphyrin-containing compound metabolism. Its function is as follows. Involved in heme d1 biosynthesis. Catalyzes the decarboxylation of siroheme into didecarboxysiroheme. The sequence is that of Siroheme decarboxylase NirL subunit from Stutzerimonas stutzeri (Pseudomonas stutzeri).